Consider the following 380-residue polypeptide: Cytochrome b (380 aa).

4 helical membrane-spanning segments follow: residues phenylalanine 33–methionine 53, tryptophan 77–isoleucine 98, tryptophan 113–leucine 133, and phenylalanine 178–leucine 198. Heme b contacts are provided by histidine 83 and histidine 97. 2 residues coordinate heme b: histidine 182 and histidine 196. Histidine 201 contacts a ubiquinone. 4 consecutive transmembrane segments (helical) span residues tyrosine 226–serine 246, leucine 288–histidine 308, valine 320–glycine 340, and phenylalanine 347–proline 367.

It belongs to the cytochrome b family. The cytochrome bc1 complex contains 3 respiratory subunits (MT-CYB, CYC1 and UQCRFS1), 2 core proteins (UQCRC1 and UQCRC2) and probably 6 low-molecular weight proteins. Heme b is required as a cofactor.

It is found in the mitochondrion inner membrane. Its function is as follows. Component of the ubiquinol-cytochrome c reductase complex (complex III or cytochrome b-c1 complex) that is part of the mitochondrial respiratory chain. The b-c1 complex mediates electron transfer from ubiquinol to cytochrome c. Contributes to the generation of a proton gradient across the mitochondrial membrane that is then used for ATP synthesis. The chain is Cytochrome b (mt-cyb) from Kareius bicoloratus (Stone flounder).